The chain runs to 792 residues: Cadherin-11 (792 aa).

The signal sequence occupies residues 1 to 22 (MKEDNCLHAALICLGMLYYSHA). Residues 23 to 53 (ITTEKLNHVRPSLHGHHEKGKEGQVLHRSKR) constitute a propeptide that is removed on maturation. 5 consecutive Cadherin domains span residues 54–159 (GWVW…PPEF), 160–268 (LHEN…PPKF), 269–383 (PQSV…PPVF), 384–486 (LKPS…DNAP), and 487–608 (KFAA…YILN). Residues 54 to 613 (GWVWNQFFVI…AYILNAGLST (560 aa)) are Extracellular-facing. N-linked (GlcNAc...) asparagine glycans are attached at residues Asn455, Asn536, and Asn594. The helical transmembrane segment at 614–634 (GALIAILACIVILLVIVVLFV) threads the bilayer. Residues 635–792 (TLKRQKKEPL…GSKDTFDDDS (158 aa)) are Cytoplasmic-facing.

Its subcellular location is the cell membrane. Cadherins are calcium-dependent cell adhesion proteins. They preferentially interact with themselves in a homophilic manner in connecting cells; cadherins may thus contribute to the sorting of heterogeneous cell types. Required for proper focal adhesion assembly. Involved in the regulation of cell migration. The protein is Cadherin-11 (CDH11) of Gallus gallus (Chicken).